We begin with the raw amino-acid sequence, 261 residues long: Potassium/proton antiporter CemA (261 aa).

3 helical membrane passes run 138 to 158 (IISHLLANLIGLVLLSVCLIL), 186 to 206 (ILLVTDLCIGFHSPHGWELMI), and 221 to 241 (IISGLVSTFPVILDTIFKYWI).

It belongs to the CemA family.

It is found in the plastid. It localises to the chloroplast inner membrane. The catalysed reaction is K(+)(in) + H(+)(out) = K(+)(out) + H(+)(in). In terms of biological role, contributes to K(+)/H(+) antiport activity by supporting proton efflux to control proton extrusion and homeostasis in chloroplasts in a light-dependent manner to modulate photosynthesis. Prevents excessive induction of non-photochemical quenching (NPQ) under continuous-light conditions. Indirectly promotes efficient inorganic carbon uptake into chloroplasts. This Cryptomeria japonica (Japanese cedar) protein is Potassium/proton antiporter CemA.